The sequence spans 359 residues: MGSAQNERIPSLTRWYIDTRQLTVTNPSLPLLEALQPSDQEAVKRFYHLRDRHMSLASNLLKYLFIHRSCCIPWNKISISRTPDPHRRPCFIPSPALTEATDEPIPGIEFNVSHQASLVALAGTIIPQSHGASPNPTTVFANPSPSSVPAPSVPQVGIDITCVDERHARTSSAPSTRDQLAGYVDIFAEVFSSRELDTIKNLGGRFPADAQDGEAVEYGLRLFYTYWALKEAYIKMTGEALLAPWLRELEFTDVIAPEPAPAPGQGSAENWGEPYTGVKIWLYGKRVEDVRIEVVAFETGYIFATAARGAGLGAESRPLSRDAGVAVSVDRWMHMEKIDIDRDIAPCATGVCQCTKKQP.

This sequence belongs to the P-Pant transferase superfamily.

It carries out the reaction apo-[ACP] + CoA = holo-[ACP] + adenosine 3',5'-bisphosphate + H(+). With respect to regulation, activity is inhibited bythe antifunfal copmpounds PD 404,182, 6-nitroso-1,2-benzopyrone, and calmidazolium chloride with IC(50) values of 3.9 uM, 35.2 uM, and 19.2 uM, respectively. Functionally, acyl-carrier-protein synthase that transfers the 4'-phosphopantetheine moiety from coenzyme A to a Ser of an acyl-carrier-protein. The 4'-phosphopantetheine (4'-PPT) portion of CoA provides the essential prosthetic group for a number of carrier proteins and multi-domain enzymes, priming them for the acceptance of acyl building blocks in fatty acid synthesis and many aspects of secondary metabolism mediated by polyketide synthases (PKSs) and non-ribosomal peptide synthetases (NRPSs). PptA is able to transfer the cofactor to a broad range of enzymes with acyl- or peptidyl-carrier protein domains and activates target enzymes involved in the synthesis of lysine, but also secondary metabolites including gliotoxin, fumigaclavine C, fumiquinazole A, fumiquinazoline C, pyripyroprene A, fumagillin, the siderophores triacetylfusarinine C (TAFC) and ferricrocin (FC), and dihydroxy naphthalene (DHN)-melanin. Plays an essential role in virulence. This chain is 4'-phosphopantetheinyl transferase A, found in Aspergillus fumigatus (strain ATCC MYA-4609 / CBS 101355 / FGSC A1100 / Af293) (Neosartorya fumigata).